Consider the following 411-residue polypeptide: MASGGVAPASGFIDKNASSVGVEKLPEEMNDMKIRDDKEMEAATIVDGNGTETGHIIVTTIGGKNGQPKQTISYMAERVVGHGSFGVVFQAKCLETGETVAIKKVLQDKRYKNRELQTMRLLDHPNVVSLKHCFFSTTEKDELYLNLVLEYVPETVSRVIRHYNKMNQRMPMIYVKLYSYQICRALAYIHNSIGVCHRDIKPQNLLVNPHTHQLKICDFGSAKVLVKGEPNISYICSRYYRAPELIFGATEYTTAIDIWSAGCVLGELLLGQPLFPGESGVDQLVEIIKVLGTPTREEIKCMNPNYTEFKFPQIKAHPWHKIFHKRMPPEAVDLVSRLLQYSPNLRSTALEALVHPFYDDVRDPNTRLPNGRFLPPLFNFKVNELKGVPAEMLVKLVPPHARKQCALFGSS.

Residues 74 to 358 form the Protein kinase domain; that stretch reads YMAERVVGHG…ALEALVHPFY (285 aa). ATP contacts are provided by residues 80 to 88 and Lys103; that span reads VGHGSFGVV. The active-site Proton acceptor is Asp199. Tyr234 is modified (phosphotyrosine).

The protein belongs to the protein kinase superfamily. CMGC Ser/Thr protein kinase family. GSK-3 subfamily. As to expression, absent in leaves and petioles, very low levels are seen in the stems and roots while a moderate expression is seen in the nodes.

It carries out the reaction L-seryl-[protein] + ATP = O-phospho-L-seryl-[protein] + ADP + H(+). It catalyses the reaction L-threonyl-[protein] + ATP = O-phospho-L-threonyl-[protein] + ADP + H(+). This chain is Glycogen synthase kinase-3 homolog MsK-3 (MSK-3), found in Medicago sativa (Alfalfa).